The primary structure comprises 86 residues: Anti-adapter protein IraP (86 aa).

The stretch at 1–47 (MKNLIAELLLKLAQKEEESKELVAQVEALEIIVTAMLRNMAQSEQQM) forms a coiled coil.

Belongs to the IraP family. As to quaternary structure, interacts with RssB.

The protein resides in the cytoplasm. In terms of biological role, inhibits RpoS proteolysis by regulating RssB activity, thereby increasing the stability of the sigma stress factor RpoS especially during phosphate and magnesium starvation, but also in stationary phase and during nitrogen starvation. Its effect on RpoS stability is due to its interaction with RssB, which probably blocks the interaction of RssB with RpoS, and the consequent delivery of the RssB-RpoS complex to the ClpXP protein degradation pathway. This Salmonella arizonae (strain ATCC BAA-731 / CDC346-86 / RSK2980) protein is Anti-adapter protein IraP.